Reading from the N-terminus, the 360-residue chain is A-type ATP synthase subunit C (360 aa).

Positions 1-23 (MRLLERLWGKKPSRKSDKKKKGT) are disordered. A compositionally biased stretch (basic residues) spans 9–22 (GKKPSRKSDKKKKG).

Belongs to the V-ATPase V0D/AC39 subunit family. Has multiple subunits with at least A(3), B(3), C, D, E, F, H, I and proteolipid K(x).

Its subcellular location is the cell membrane. In terms of biological role, component of the A-type ATP synthase that produces ATP from ADP in the presence of a proton gradient across the membrane. This chain is A-type ATP synthase subunit C, found in Methanosarcina acetivorans (strain ATCC 35395 / DSM 2834 / JCM 12185 / C2A).